The primary structure comprises 1027 residues: Presequence protease, mitochondrial (1027 aa).

Residues 1 to 22 (MIRQCWAGLRLCRALYQTSYRW) constitute a mitochondrion transit peptide. Zn(2+) is bound at residue histidine 98. Glutamate 101 acts as the Proton acceptor in catalysis. Zn(2+)-binding residues include histidine 102 and glutamate 199. An intrachain disulfide couples cysteine 113 to cysteine 550. The segment at 803–827 (RKAIRPHVVEKSSNPSPSGSEISRT) is disordered. Low complexity predominate over residues 814 to 825 (SSNPSPSGSEIS).

The protein belongs to the peptidase M16 family. PreP subfamily. In terms of assembly, monomer and homodimer; homodimerization is induced by binding of the substrate. Requires Zn(2+) as cofactor. A disulfide bond locks the enzyme in the closed conformation preventing substrate entry into the catalytic chamber.

The protein resides in the mitochondrion matrix. With respect to regulation, mainly exists in a closed and catalytically competent conformation but a closed-to-open switch allows substrate entry into the catalytic chamber. Substrate binding induces closure and dimerization. A disulfide bond may lock the enzyme in a closed conformation preventing substrate entry into the catalytic chamber, participating in redox regulation of the enzyme. Inhibited by metal-chelating agents. Inhibited by nickel and zinc excess, and slightly activated by manganese. Metalloendopeptidase of the mitochondrial matrix that functions in peptide cleavage and degradation rather than in protein processing. Has an ATP-independent activity. Specifically cleaves peptides in the range of 5 to 65 residues. Shows a preference for cleavage after small polar residues and before basic residues, but without any positional preference. Degrades the transit peptides of mitochondrial proteins after their cleavage. Also degrades other unstructured peptides. The chain is Presequence protease, mitochondrial (pitrm1) from Xenopus laevis (African clawed frog).